We begin with the raw amino-acid sequence, 603 residues long: MISTGLPLFTLSKICHNCFFKQTRSLSRYSSKDKVKGRRRLLPRPNTEKFNSARSGVGVGVGNGAGAGARVGVGAGAGSVAAKVFESGNFSQLHNNGLSKQAQTAGLDLKQKITSFDQLKVFPSVREAMIKEIKSQYNLKGPQHSSIDDVVIKPTPVQIAAIRKINQTRKIKVAKNLDEMSEGERIQIELQTKNEEQKTKIFTVAAETGSGKTWAYLANIMSKLKEDDYKWFNQSPEAYNSFKSSEQVRSVILLPTHELVEQVYETLKRANSFLLEYENVPLQYKEFLNLPEHHTLGLSIAKLSHGDAPINVYKQLRNRGKIDILITTPGKITSFSKLESIDRPFKIFKSIRYCVIDEADTLFDDSFLKDTTAVVKNFPKLLDLILVSATIPKEFEKTLLRLFPDQKSLIRVATPSLHKISKNIKVMTLDADLAPYNGSKTRCLAQAIYAISKDGTEHNHVKRIIIFVNEKAEVDGLVDLLQSKYHIRREDICGISGSVNVGDRKDYLEPFLKPAQLLEDDVDQSKIKILVTTDLLARGMNFIGIKNVILMGLPKSSVELVHRLGRTGRMNQLGRVFIIVDKKSRKSWVKGLGSAIMKGSRIG.

The transit peptide at 1–71 (MISTGLPLFT…GNGAGAGARV (71 aa)) directs the protein to the mitochondrion. A Q motif motif is present at residues 151 to 158 (VIKPTPVQ). Positions 193-409 (KNEEQKTKIF…LRLFPDQKSL (217 aa)) constitute a Helicase ATP-binding domain. 206 to 213 (AETGSGKT) is an ATP binding site. Positions 357-360 (DEAD) match the DEAD box motif. Positions 443–603 (CLAQAIYAIS…SAIMKGSRIG (161 aa)) constitute a Helicase C-terminal domain.

The protein belongs to the DEAD box helicase family. MRH4 subfamily.

It localises to the mitochondrion. It catalyses the reaction ATP + H2O = ADP + phosphate + H(+). ATP-binding RNA helicase involved in mitochondrial RNA metabolism. Required for maintenance of mitochondrial DNA. The polypeptide is ATP-dependent RNA helicase MRH4, mitochondrial (MRH4) (Lodderomyces elongisporus (strain ATCC 11503 / CBS 2605 / JCM 1781 / NBRC 1676 / NRRL YB-4239) (Yeast)).